The following is a 395-amino-acid chain: Elongation factor Tu (395 aa).

The tr-type G domain occupies Lys10–Gln204. Residues Gly19–Thr26 are G1. Gly19 to Thr26 is a binding site for GTP. Thr26 contributes to the Mg(2+) binding site. Positions Gly60–Asn64 are G2. The G3 stretch occupies residues Asp81–Gly84. GTP-binding positions include Asp81 to His85 and Asn136 to Asp139. A G4 region spans residues Asn136–Asp139. The tract at residues Ser174–Leu176 is G5.

The protein belongs to the TRAFAC class translation factor GTPase superfamily. Classic translation factor GTPase family. EF-Tu/EF-1A subfamily. Monomer.

The protein resides in the cytoplasm. The enzyme catalyses GTP + H2O = GDP + phosphate + H(+). In terms of biological role, GTP hydrolase that promotes the GTP-dependent binding of aminoacyl-tRNA to the A-site of ribosomes during protein biosynthesis. This chain is Elongation factor Tu, found in Azobacteroides pseudotrichonymphae genomovar. CFP2.